Consider the following 149-residue polypeptide: D-aminoacyl-tRNA deacylase (149 aa).

Residues 139-140 (GP) carry the Gly-cisPro motif, important for rejection of L-amino acids motif.

This sequence belongs to the DTD family. Homodimer.

The protein resides in the cytoplasm. It catalyses the reaction glycyl-tRNA(Ala) + H2O = tRNA(Ala) + glycine + H(+). It carries out the reaction a D-aminoacyl-tRNA + H2O = a tRNA + a D-alpha-amino acid + H(+). In terms of biological role, an aminoacyl-tRNA editing enzyme that deacylates mischarged D-aminoacyl-tRNAs. Also deacylates mischarged glycyl-tRNA(Ala), protecting cells against glycine mischarging by AlaRS. Acts via tRNA-based rather than protein-based catalysis; rejects L-amino acids rather than detecting D-amino acids in the active site. By recycling D-aminoacyl-tRNA to D-amino acids and free tRNA molecules, this enzyme counteracts the toxicity associated with the formation of D-aminoacyl-tRNA entities in vivo and helps enforce protein L-homochirality. This chain is D-aminoacyl-tRNA deacylase (DTD1), found in Candida glabrata (strain ATCC 2001 / BCRC 20586 / JCM 3761 / NBRC 0622 / NRRL Y-65 / CBS 138) (Yeast).